The chain runs to 446 residues: Nuclear distribution protein PAC1-1 (446 aa).

Positions 9-41 (QAEELHKSLIAYLSSINASQSVTTLREELQIGD) constitute a LisH domain. Residues 60-86 (ISVVRLQKRILDLESKIASLQAELDSA) are a coiled coil. WD repeat units follow at residues 112–153 (SHRG…RTLK), 155–195 (HTRT…ANIR), 199–239 (GHDH…CVKT), 242–281 (TQGDWVRDVFPSFDGKWLVSGGRDQAATIWEVSSGEARAS), 284–344 (GHEN…IKTL), 346–385 (GHNNWVRGLVFHPGGKYLFSVGDDKTIRCWDLSQEGKLVK), 390–430 (AHEH…TGFR), and 432–446 (VIATGSADSCVRVFM).

It belongs to the WD repeat LIS1/nudF family. In terms of assembly, self-associates. Interacts with NDL1 and dynein.

The protein resides in the cytoplasm. It localises to the cytoskeleton. The protein localises to the spindle pole. Functionally, positively regulates the activity of the minus-end directed microtubule motor protein dynein. May enhance dynein-mediated microtubule sliding by targeting dynein to the microtubule plus end. Required for nuclear migration during vegetative growth as well as development. Required for retrograde early endosome (EE) transport from the hyphal tip. Required for localization of dynein to the mitotic spindle poles. Recruits additional proteins to the dynein complex at SPBs. The protein is Nuclear distribution protein PAC1-1 of Uncinocarpus reesii (strain UAMH 1704).